The chain runs to 534 residues: Cytidylyl-2-hydroxyethylphosphonate methyltransferase (534 aa).

Residues 38–195 (KVLLLNPSAT…EHLNGNVSDD (158 aa)) enclose the B12-binding domain. In terms of domain architecture, Radical SAM core spans 268–496 (TVGSRVGQLY…TYKQGIINVP (229 aa)). [4Fe-4S] cluster contacts are provided by cysteine 282, cysteine 286, and cysteine 289.

The protein belongs to the radical SAM superfamily. Requires [4Fe-4S] cluster as cofactor. Methylcob(III)alamin serves as cofactor.

The enzyme catalyses cytidine 5'-{[hydroxy(2-hydroxyethyl)phosphonoyl]phosphate} + AH2 + 2 S-adenosyl-L-methionine = cytidine 5'-({hydroxy[(S)-2-hydroxypropyl]phosphonoyl}phosphate) + 5'-deoxyadenosine + L-methionine + A + S-adenosyl-L-homocysteine + 2 H(+). It functions in the pathway antibiotic biosynthesis; fosfomycin biosynthesis. Functionally, involved in fosfomycin biosynthesis. Catalyzes the C-methylation of cytidylyl-2-hydroxyethylphosphonate (HEP-CMP) to form cytidylyl-2-hydroxypropylphosphonate (HPP-CMP). The C-methylation is not stereoselective and the ratio of (S)- to (R)-HPP-CMP is almost equal in vitro. The polypeptide is Cytidylyl-2-hydroxyethylphosphonate methyltransferase (Streptomyces wedmorensis).